The chain runs to 524 residues: Chromosomal replication initiator protein DnaA (524 aa).

The tract at residues 1 to 73 (MELPESAWEQ…DELLSSADHH (73 aa)) is domain I, interacts with DnaA modulators. Residues 73 to 187 (HPITSVEISV…DVEGGLQHKS (115 aa)) form a domain II region. Composition is skewed to polar residues over residues 86-95 (RSTSFETNQG), 106-126 (APRQNIASSQPSNSYSRQPQQ), and 153-165 (NGYNTESFAQPYN). Residues 86–173 (RSTSFETNQG…YNDNPMGQGK (88 aa)) are disordered. The domain III, AAA+ region stretch occupies residues 188 to 404 (NLNPTFIFDN…GALKRVIANA (217 aa)). ATP contacts are provided by G232, G234, K235, and T236. The interval 405–524 (HFTGRDISVE…VKNLLRTLTT (120 aa)) is domain IV, binds dsDNA.

It belongs to the DnaA family. Oligomerizes as a right-handed, spiral filament on DNA at oriC.

The protein localises to the cytoplasm. Functionally, plays an essential role in the initiation and regulation of chromosomal replication. ATP-DnaA binds to the origin of replication (oriC) to initiate formation of the DNA replication initiation complex once per cell cycle. Binds the DnaA box (a 9 base pair repeat at the origin) and separates the double-stranded (ds)DNA. Forms a right-handed helical filament on oriC DNA; dsDNA binds to the exterior of the filament while single-stranded (ss)DNA is stabiized in the filament's interior. The ATP-DnaA-oriC complex binds and stabilizes one strand of the AT-rich DNA unwinding element (DUE), permitting loading of DNA polymerase. After initiation quickly degrades to an ADP-DnaA complex that is not apt for DNA replication. Binds acidic phospholipids. The polypeptide is Chromosomal replication initiator protein DnaA (Saccharophagus degradans (strain 2-40 / ATCC 43961 / DSM 17024)).